Consider the following 107-residue polypeptide: UPF0145 protein Ent638_1382 (107 aa).

It belongs to the UPF0145 family.

The protein is UPF0145 protein Ent638_1382 of Enterobacter sp. (strain 638).